The chain runs to 229 residues: NAD-dependent protein deacetylase (229 aa).

Positions 1–229 constitute a Deacetylase sirtuin-type domain; that stretch reads MNNLKEAIKQ…NDAVKVFAEI (229 aa). Residues alanine 20, arginine 32, glutamine 96, isoleucine 98, aspartate 99, histidine 114, threonine 181, serine 182, asparagine 205, and valine 223 each contribute to the NAD(+) site. Positions 98 and 99 each coordinate nicotinamide. The active-site Proton acceptor is histidine 114.

Belongs to the sirtuin family. Class U subfamily.

The protein localises to the cytoplasm. It carries out the reaction N(6)-acetyl-L-lysyl-[protein] + NAD(+) + H2O = 2''-O-acetyl-ADP-D-ribose + nicotinamide + L-lysyl-[protein]. Its function is as follows. NAD-dependent protein deacetylase which modulates the activities of several enzymes which are inactive in their acetylated form. The sequence is that of NAD-dependent protein deacetylase from Listeria innocua serovar 6a (strain ATCC BAA-680 / CLIP 11262).